The sequence spans 214 residues: Pyridoxine/pyridoxamine 5'-phosphate oxidase (214 aa).

Residues 9-12 (RKDY) and Lys67 contribute to the substrate site. FMN is bound by residues 62–67 (RMVLLK), 77–78 (FT), Arg83, Lys84, and Gln106. The substrate site is built by Tyr124, Arg128, and Ser132. FMN contacts are provided by residues 141–142 (QS) and Trp186. Position 192 to 194 (192 to 194 (RLH)) interacts with substrate. Arg196 is a binding site for FMN.

It belongs to the pyridoxamine 5'-phosphate oxidase family. Homodimer. FMN serves as cofactor.

It catalyses the reaction pyridoxamine 5'-phosphate + O2 + H2O = pyridoxal 5'-phosphate + H2O2 + NH4(+). It carries out the reaction pyridoxine 5'-phosphate + O2 = pyridoxal 5'-phosphate + H2O2. It participates in cofactor metabolism; pyridoxal 5'-phosphate salvage; pyridoxal 5'-phosphate from pyridoxamine 5'-phosphate: step 1/1. It functions in the pathway cofactor metabolism; pyridoxal 5'-phosphate salvage; pyridoxal 5'-phosphate from pyridoxine 5'-phosphate: step 1/1. Catalyzes the oxidation of either pyridoxine 5'-phosphate (PNP) or pyridoxamine 5'-phosphate (PMP) into pyridoxal 5'-phosphate (PLP). The polypeptide is Pyridoxine/pyridoxamine 5'-phosphate oxidase (Trichormus variabilis (strain ATCC 29413 / PCC 7937) (Anabaena variabilis)).